We begin with the raw amino-acid sequence, 127 residues long: Mitochondrial pyruvate carrier 2 (127 aa).

Topologically, residues 2–40 are mitochondrial matrix; that stretch reads AAAGARGLRATYHRLMDKVELLLPKKLRPLYNHPAGPRT. Lysine 26 is modified (N6-acetyllysine). The helical transmembrane segment at 41–61 threads the bilayer; sequence VFFWAPIMKWGLVCAGLADMA. At 62–72 the chain is on the mitochondrial intermembrane side; it reads RPAEKLSTAQS. Residues 73 to 90 traverse the membrane as a helical segment; it reads TVLMATGFIWSRYSLVII. Over 91 to 95 the chain is Mitochondrial matrix; the sequence is PKNWS. Residues 96–115 traverse the membrane as a helical segment; it reads LFAVNFFVGSAGASQLFRIW. Topologically, residues 116–127 are mitochondrial intermembrane; it reads KYNQELKSKGIQ.

The protein belongs to the mitochondrial pyruvate carrier (MPC) (TC 2.A.105) family. In terms of assembly, homodimer. Homooligomer. Forms heterodimers with MPC1 and MPC1L. The heterodimer is the more stable and dominant form. Liver, kidney, and brain.

It is found in the mitochondrion inner membrane. The enzyme catalyses pyruvate(out) + H(+)(out) = pyruvate(in) + H(+)(in). Mediates the uptake of pyruvate into mitochondria. The chain is Mitochondrial pyruvate carrier 2 (Mpc2) from Rattus norvegicus (Rat).